The primary structure comprises 91 residues: Acylphosphatase (91 aa).

The Acylphosphatase-like domain occupies 3–91; it reads TVTMRVTGLV…EKFTRFSVVY (89 aa). Active-site residues include arginine 18 and asparagine 36.

It belongs to the acylphosphatase family.

The catalysed reaction is an acyl phosphate + H2O = a carboxylate + phosphate + H(+). This is Acylphosphatase (acyP) from Lactobacillus johnsonii (strain CNCM I-12250 / La1 / NCC 533).